The following is a 54-amino-acid chain: UPF0391 membrane protein Daro_2080 (54 aa).

2 helical membrane passes run Ala5 to Ala25 and Ile30 to Phe50.

The protein belongs to the UPF0391 family.

The protein resides in the cell membrane. The sequence is that of UPF0391 membrane protein Daro_2080 from Dechloromonas aromatica (strain RCB).